A 445-amino-acid chain; its full sequence is Ribosomal protein uS12 methylthiotransferase RimO (445 aa).

The region spanning I4 to K119 is the MTTase N-terminal domain. C13, C48, C82, C156, C160, and C163 together coordinate [4Fe-4S] cluster. The Radical SAM core domain occupies T142–D372. Residues K375 to N441 form the TRAM domain.

The protein belongs to the methylthiotransferase family. RimO subfamily. It depends on [4Fe-4S] cluster as a cofactor.

The protein localises to the cytoplasm. It carries out the reaction L-aspartate(89)-[ribosomal protein uS12]-hydrogen + (sulfur carrier)-SH + AH2 + 2 S-adenosyl-L-methionine = 3-methylsulfanyl-L-aspartate(89)-[ribosomal protein uS12]-hydrogen + (sulfur carrier)-H + 5'-deoxyadenosine + L-methionine + A + S-adenosyl-L-homocysteine + 2 H(+). In terms of biological role, catalyzes the methylthiolation of an aspartic acid residue of ribosomal protein uS12. This Clostridium botulinum (strain ATCC 19397 / Type A) protein is Ribosomal protein uS12 methylthiotransferase RimO.